A 348-amino-acid chain; its full sequence is Lipoyl synthase (348 aa).

Residues Cys-55, Cys-60, Cys-66, Cys-81, Cys-85, Cys-88, and Ser-292 each contribute to the [4Fe-4S] cluster site. In terms of domain architecture, Radical SAM core spans 67 to 281; it reads WESREATFLI…ADAAKEMGFA (215 aa).

The protein belongs to the radical SAM superfamily. Lipoyl synthase family. [4Fe-4S] cluster is required as a cofactor.

It localises to the cytoplasm. The catalysed reaction is [[Fe-S] cluster scaffold protein carrying a second [4Fe-4S](2+) cluster] + N(6)-octanoyl-L-lysyl-[protein] + 2 oxidized [2Fe-2S]-[ferredoxin] + 2 S-adenosyl-L-methionine + 4 H(+) = [[Fe-S] cluster scaffold protein] + N(6)-[(R)-dihydrolipoyl]-L-lysyl-[protein] + 4 Fe(3+) + 2 hydrogen sulfide + 2 5'-deoxyadenosine + 2 L-methionine + 2 reduced [2Fe-2S]-[ferredoxin]. It participates in protein modification; protein lipoylation via endogenous pathway; protein N(6)-(lipoyl)lysine from octanoyl-[acyl-carrier-protein]: step 2/2. In terms of biological role, catalyzes the radical-mediated insertion of two sulfur atoms into the C-6 and C-8 positions of the octanoyl moiety bound to the lipoyl domains of lipoate-dependent enzymes, thereby converting the octanoylated domains into lipoylated derivatives. The protein is Lipoyl synthase of Corynebacterium glutamicum (strain R).